A 174-amino-acid polypeptide reads, in one-letter code: N5-carboxyaminoimidazole ribonucleotide mutase (174 aa).

Substrate contacts are provided by S15, D18, and R45.

The protein belongs to the AIR carboxylase family. Class I subfamily.

The enzyme catalyses 5-carboxyamino-1-(5-phospho-D-ribosyl)imidazole + H(+) = 5-amino-1-(5-phospho-D-ribosyl)imidazole-4-carboxylate. Its pathway is purine metabolism; IMP biosynthesis via de novo pathway; 5-amino-1-(5-phospho-D-ribosyl)imidazole-4-carboxylate from 5-amino-1-(5-phospho-D-ribosyl)imidazole (N5-CAIR route): step 2/2. Its function is as follows. Catalyzes the conversion of N5-carboxyaminoimidazole ribonucleotide (N5-CAIR) to 4-carboxy-5-aminoimidazole ribonucleotide (CAIR). In Pyrococcus abyssi (strain GE5 / Orsay), this protein is N5-carboxyaminoimidazole ribonucleotide mutase.